The sequence spans 490 residues: Polyamine transporter RMV1 (490 aa).

Residues 1-21 (MTELSSPNLDSASQKPRISTE) are compositionally biased toward polar residues. The tract at residues 1–38 (MTELSSPNLDSASQKPRISTENPPPPPPHISIGVTTGD) is disordered. The next 12 membrane-spanning stretches (helical) occupy residues 53–73 (ITVL…PFGI), 83–103 (LLAI…EALI), 116–136 (GYVV…QGWV), 160–180 (IPIL…TVAL), 188–208 (LSIV…PFVV), 231–248 (GVNW…LNYW), 273–293 (LLLV…AIAL), 303–323 (FADI…QAAA), 363–383 (TPWV…WLSF), 386–406 (IVAA…ITFV), 425–445 (VLGS…IMAF), and 448–468 (LKVA…QPCL).

Belongs to the amino acid-polyamine-organocation (APC) superfamily. Polyamine:cation symporter (PHS) (TC 2.A.3.12) family.

It is found in the cell membrane. Functionally, cell membrane polyamine/proton symporter involved in the polyamine uptake in cells. Possesses high affinity for spermine and spermidine and lower affinity for putrescine. Transports paraquat, a polyamine analog, and thus confers sensitivity to this chemical which is used as a herbicide. This Arabidopsis thaliana (Mouse-ear cress) protein is Polyamine transporter RMV1 (RMV1).